Consider the following 588-residue polypeptide: MARGGLGAEEASLRSNALSWLACGLLALLANAWIILSISAKQQKHKPLELLLCFLAGTHILMAAVPLTTFAVVQLRRQASSDYDWNESICKVFVSTYYTLALATCFTVASLSYHRMWMVRWPVNYRLSNAKKQALHAVMGIWMVSFILSTLPSIGWHNNGERYYARGCQFIVSKIGLGFGVCFSLLLLGGIVMGLVCVAITFYQTLWARPRRARQARRAGGSVGTKAGGLGGLGTRPAFEVPAIVVEDTRGKRRSSLDGSESAKTSLQVTNLVSAIVFLYDSLTGVPILVVSFFSLKSDSAPPWMVLAVLWCSMAQTLLLPSFIWSCERYRADVRTVWEQCVAIMSEDDGDDDGTCDDYTDGRVCKIRFDANGATGSGSRDPTQVKLLPGRHMLFPPLERVHYLQVPLSRRLSHDETNIFSTPRAPGSFLHKWSSSDDIRILPAQSRALGGPPEYLGQRHRLEDEEDEEEAEGGGLASLRQFLESGVLGSGGGPPRGPGFFREEITTFIDETPLPSPTASPGPSPRRPRPLGFSPRRLSLGSPDSRAVGLPLGLSAGRRCSLTGSEGSSRAWGRPWGPGNPIFPQLTL.

Residues 1-17 lie on the Extracellular side of the membrane; the sequence is MARGGLGAEEASLRSNA. A helical membrane pass occupies residues 18-38; sequence LSWLACGLLALLANAWIILSI. Residues 39–49 are Cytoplasmic-facing; sequence SAKQQKHKPLE. Residues 50–70 traverse the membrane as a helical segment; the sequence is LLLCFLAGTHILMAAVPLTTF. Topologically, residues 71 to 91 are extracellular; sequence AVVQLRRQASSDYDWNESICK. N-linked (GlcNAc...) asparagine glycosylation occurs at Asn86. The chain crosses the membrane as a helical span at residues 92-112; sequence VFVSTYYTLALATCFTVASLS. At 113–133 the chain is on the cytoplasmic side; sequence YHRMWMVRWPVNYRLSNAKKQ. Residues 134–154 traverse the membrane as a helical segment; sequence ALHAVMGIWMVSFILSTLPSI. At 155 to 174 the chain is on the extracellular side; it reads GWHNNGERYYARGCQFIVSK. The helical transmembrane segment at 175 to 195 threads the bilayer; that stretch reads IGLGFGVCFSLLLLGGIVMGL. Topologically, residues 196–275 are cytoplasmic; it reads VCVAITFYQT…SLQVTNLVSA (80 aa). A helical membrane pass occupies residues 276–296; that stretch reads IVFLYDSLTGVPILVVSFFSL. Residues 297–303 are Extracellular-facing; sequence KSDSAPP. Residues 304–324 traverse the membrane as a helical segment; it reads WMVLAVLWCSMAQTLLLPSFI. Residues 325 to 588 lie on the Cytoplasmic side of the membrane; it reads WSCERYRADV…GNPIFPQLTL (264 aa). A phosphoserine mark is found at Ser413 and Ser435. Disordered regions lie at residues 511-545 and 561-588; these read ETPLPSPTASPGPSPRRPRPLGFSPRRLSLGSPDS and SLTGSEGSSRAWGRPWGPGNPIFPQLTL. Positions 514-525 are enriched in pro residues; that stretch reads LPSPTASPGPSP. The span at 530–540 shows a compositional bias: low complexity; that stretch reads PLGFSPRRLSL.

The protein belongs to the G-protein coupled receptor 1 family.

The protein resides in the cell membrane. Its function is as follows. Orphan receptor. The chain is Probable G-protein coupled receptor 162 (Gpr162) from Mus musculus (Mouse).